The following is a 187-amino-acid chain: Accessory gene regulator protein B (187 aa).

Helical transmembrane passes span 49–69 (ISIF…YMLI), 82–102 (ILCY…LINI), 106–126 (FTYL…YAPA), 144–164 (VSII…PFYA), and 166–186 (FMLL…FPKE).

Belongs to the AgrB family.

The protein resides in the cell membrane. In terms of biological role, essential for the production of a quorum sensing system signal molecule, the autoinducing peptide (AIP). This quorum sensing system is responsible for the regulation of the expression of virulence factor genes. Involved in the proteolytic processing of AgrD, the precursor of AIP. This chain is Accessory gene regulator protein B, found in Staphylococcus aureus (strain bovine RF122 / ET3-1).